A 387-amino-acid chain; its full sequence is Ferrochelatase (387 aa).

Residues His196 and Glu277 each contribute to the Fe cation site.

Belongs to the ferrochelatase family.

It localises to the cytoplasm. The enzyme catalyses heme b + 2 H(+) = protoporphyrin IX + Fe(2+). Its pathway is porphyrin-containing compound metabolism; protoheme biosynthesis; protoheme from protoporphyrin-IX: step 1/1. Catalyzes the ferrous insertion into protoporphyrin IX. The protein is Ferrochelatase of Trichodesmium erythraeum (strain IMS101).